We begin with the raw amino-acid sequence, 416 residues long: RNA polymerase sigma-C factor (416 aa).

A Polymerase core binding motif is present at residues 205–218 (DLVQEGTLGLERAV). The H-T-H motif DNA-binding region spans 374–393 (LAEIGRALDLSRERVRQIES).

It belongs to the sigma-70 factor family.

In terms of biological role, sigma factors are initiation factors that promote the attachment of RNA polymerase to specific initiation sites and are then released. This is RNA polymerase sigma-C factor (sigC) from Nostoc sp. (strain PCC 7120 / SAG 25.82 / UTEX 2576).